The following is a 503-amino-acid chain: Maturase K (503 aa).

Belongs to the intron maturase 2 family. MatK subfamily.

It localises to the plastid. It is found in the chloroplast. Its function is as follows. Usually encoded in the trnK tRNA gene intron. Probably assists in splicing its own and other chloroplast group II introns. The sequence is that of Maturase K from Vicia sativa (Spring vetch).